The primary structure comprises 626 residues: Two-component response regulator ORR24 (626 aa).

Residues 1–22 (MTVEERQGRVGGHGVSGGGGGR) are disordered. Positions 9–22 (RVGGHGVSGGGGGR) are enriched in gly residues. The Response regulatory domain maps to 30–145 (RVLAVDDDPT…QLRTIWQHVI (116 aa)). Position 81 is a 4-aspartylphosphate (Asp81). The span at 151 to 162 (DAKNRGNDDDAG) shows a compositional bias: basic and acidic residues. Disordered stretches follow at residues 151–215 (DAKN…KKPR) and 402–440 (PLES…RTTN). Residues 191–202 (NGDDGDDSDENS) show a composition bias toward acidic residues. The segment at residues 210 to 269 (TQKKPRVVWSVELHRKFVAAVNQLGIEKAVPKKILDLMNVENITRENVASHLQKYRLYLK) is a DNA-binding region (myb-like GARP). The span at 402–421 (PLESSNQQHLSRVHSSSADP) shows a compositional bias: polar residues.

It belongs to the ARR family. Type-B subfamily. Post-translationally, two-component system major event consists of a His-to-Asp phosphorelay between a sensor histidine kinase (HK) and a response regulator (RR). In plants, the His-to-Asp phosphorelay involves an additional intermediate named Histidine-containing phosphotransfer protein (HPt). This multistep phosphorelay consists of a His-Asp-His-Asp sequential transfer of a phosphate group between first a His and an Asp of the HK protein, followed by the transfer to a conserved His of the HPt protein and finally the transfer to an Asp in the receiver domain of the RR protein.

The protein localises to the nucleus. In terms of biological role, transcriptional activator that binds specific DNA sequence. Functions as a response regulator involved in His-to-Asp phosphorelay signal transduction system. Phosphorylation of the Asp residue in the receiver domain activates the ability of the protein to promote the transcription of target genes. May directly activate some type-A response regulators in response to cytokinins. The protein is Two-component response regulator ORR24 of Oryza sativa subsp. japonica (Rice).